A 169-amino-acid polypeptide reads, in one-letter code: Phosphopantetheine adenylyltransferase (169 aa).

Position 14 (Thr-14) interacts with substrate. ATP is bound by residues 14-15 (TF) and His-22. 3 residues coordinate substrate: Lys-46, Leu-78, and Arg-92. ATP is bound by residues 93–95 (GLR), Glu-103, and 128–134 (HSFISSS).

It belongs to the bacterial CoaD family. In terms of assembly, homohexamer. Requires Mg(2+) as cofactor.

It is found in the cytoplasm. It catalyses the reaction (R)-4'-phosphopantetheine + ATP + H(+) = 3'-dephospho-CoA + diphosphate. It participates in cofactor biosynthesis; coenzyme A biosynthesis; CoA from (R)-pantothenate: step 4/5. Its function is as follows. Reversibly transfers an adenylyl group from ATP to 4'-phosphopantetheine, yielding dephospho-CoA (dPCoA) and pyrophosphate. This chain is Phosphopantetheine adenylyltransferase, found in Stenotrophomonas maltophilia (strain R551-3).